The chain runs to 438 residues: Exosome complex component RRP45 (438 aa).

Serine 65 is subject to Phosphoserine. An N6-acetyllysine; alternate modification is found at lysine 297. Lysine 297 participates in a covalent cross-link: Glycyl lysine isopeptide (Lys-Gly) (interchain with G-Cter in SUMO1); alternate. A Glycyl lysine isopeptide (Lys-Gly) (interchain with G-Cter in SUMO2); alternate cross-link involves residue lysine 297. Serine 306 and serine 346 each carry phosphoserine. Disordered regions lie at residues 337-365 (AQIG…GGID) and 377-438 (TGEV…RTAN). Acidic residues predominate over residues 349 to 364 (DLEDSEKEEEEEEGGI). Phosphoserine is present on residues serine 393 and serine 395. Positions 427–438 (QGKRKKKKRTAN) are enriched in basic residues.

It belongs to the RNase PH family. In terms of assembly, component of the RNA exosome core complex (Exo-9), composed of EXOSC1, EXOSC2, EXOSC3, EXOSC4, EXOSC5, EXOSC6, EXOSC7, EXOSC8 and EXOSC9; within the complex interacts with EXOSC3, EXOSC4, EXOSC5 and DIS3. The catalytically inactive RNA exosome core complex (Exo-9) associates with the catalytic subunit EXOSC10/RRP6. Exo-9 may associate with DIS3 to form the nucleolar exosome complex, or DIS3L to form the cytoplasmic exosome complex. Exo-9 is formed by a hexameric base ring consisting of the heterodimers EXOSC4-EXOSC9, EXOSC5-EXOSC8 and EXOSC6-EXOSC7, and a cap ring consisting of EXOSC1, EXOSC2 and EXOSC3. The RNA exosome complex associates with cofactors C1D/RRP47, MPHOSPH6/MPP6 and MTREX/MTR4. Interacts (via C-terminus region) with SETX (via N-terminus domain); the interaction enhances SETX sumoylation. Interacts with DIS3; the interaction is direct.

The protein localises to the cytoplasm. It localises to the nucleus. It is found in the nucleolus. Its subcellular location is the nucleoplasm. Non-catalytic component of the RNA exosome complex which has 3'-&gt;5' exoribonuclease activity and participates in a multitude of cellular RNA processing and degradation events. In the nucleus, the RNA exosome complex is involved in proper maturation of stable RNA species such as rRNA, snRNA and snoRNA, in the elimination of RNA processing by-products and non-coding 'pervasive' transcripts, such as antisense RNA species and promoter-upstream transcripts (PROMPTs), and of mRNAs with processing defects, thereby limiting or excluding their export to the cytoplasm. The RNA exosome may be involved in Ig class switch recombination (CSR) and/or Ig variable region somatic hypermutation (SHM) by targeting AICDA deamination activity to transcribed dsDNA substrates. In the cytoplasm, the RNA exosome complex is involved in general mRNA turnover and specifically degrades inherently unstable mRNAs containing AU-rich elements (AREs) within their 3' untranslated regions, and in RNA surveillance pathways, preventing translation of aberrant mRNAs. It seems to be involved in degradation of histone mRNA. The catalytic inactive RNA exosome core complex of 9 subunits (Exo-9) is proposed to play a pivotal role in the binding and presentation of RNA for ribonucleolysis, and to serve as a scaffold for the association with catalytic subunits and accessory proteins or complexes. EXOSC9 binds to ARE-containing RNAs. The polypeptide is Exosome complex component RRP45 (Exosc9) (Mus musculus (Mouse)).